Here is a 236-residue protein sequence, read N- to C-terminus: Small ribosomal subunit protein uS2c (236 aa).

This sequence belongs to the universal ribosomal protein uS2 family.

The protein localises to the plastid. It localises to the chloroplast. The polypeptide is Small ribosomal subunit protein uS2c (rps2) (Platanus occidentalis (Sycamore)).